The following is an 80-amino-acid chain: Exodeoxyribonuclease 7 small subunit (80 aa).

It belongs to the XseB family. Heterooligomer composed of large and small subunits.

The protein resides in the cytoplasm. It catalyses the reaction Exonucleolytic cleavage in either 5'- to 3'- or 3'- to 5'-direction to yield nucleoside 5'-phosphates.. In terms of biological role, bidirectionally degrades single-stranded DNA into large acid-insoluble oligonucleotides, which are then degraded further into small acid-soluble oligonucleotides. The polypeptide is Exodeoxyribonuclease 7 small subunit (Rickettsia felis (strain ATCC VR-1525 / URRWXCal2) (Rickettsia azadi)).